A 242-amino-acid polypeptide reads, in one-letter code: Invasion chromosome antigen R (242 aa).

Its subcellular location is the secreted. Functionally, may contribute to pathogenesis, although some of its characteristics suggest it is a fossil gene. The protein is Invasion chromosome antigen R of Shigella flexneri serotype 5a (strain M90T).